A 1083-amino-acid polypeptide reads, in one-letter code: Centrosomal protein of 131 kDa (1083 aa).

2 disordered regions span residues 1 to 155 (MKGT…AGPR) and 220 to 258 (GSESSGFGKLPKNVSSATHSARNNTGGSTGLPRRKEVTE). Positions 1–250 (MKGTRAIGSV…RNNTGGSTGL (250 aa)) are interaction with PLK4. Residues S14 and S35 each carry the phosphoserine modification. A Phosphoserine; by MAPKAPK2 modification is found at S47. A compositionally biased stretch (polar residues) spans 68–87 (QAINNLRRSNSTTQVSQPRS). S78 bears the Phosphoserine; by MAPKAPK2 and PLK4 mark. Residues S89, S105, S114, S146, and S150 each carry the phosphoserine modification. Over residues 138–148 (LPSNARSSSAL) the composition is skewed to polar residues. Positions 232 to 245 (NVSSATHSARNNTG) are enriched in polar residues. One can recognise an IQ domain in the interval 269–289 (NQATVTIQRWYRHQVQRRGAG). Residues 301–429 (REEQRQRSGE…PQQPPEDRTQ (129 aa)) are disordered. Basic and acidic residues-rich tracts occupy residues 317–333 (HQQKEAARRKAREEKAR) and 360–369 (GPPENPRETR). Position 381 is a phosphoserine (S381). T383 carries the phosphothreonine modification. A phosphoserine mark is found at S453, S489, D496, S499, S731, and S798. Residues 1047–1076 (KEEAVSSLRTQHEAAVKRADHLEELLEQHR) are compositionally biased toward basic and acidic residues. The segment at 1047-1083 (KEEAVSSLRTQHEAAVKRADHLEELLEQHRRPTPSTK) is disordered.

It belongs to the CEP131 family. In terms of assembly, self-associates. Associates with the centriolar satellite BBSome protein complex. Interacts with BBS4; the interaction limits BBS4 availability for association with the BBSome complex, and hence negatively regulates ciliary localization of the BBSome complex. Interacts with MIB1. Interacts with PCM1; the interaction increases in response to ultraviolet light (UV) radiation. Associates with microtubules; association with microtubules is reduced in response to cellular stress, such as UV stimulation, in a process that requires p38 MAP kinase signaling. Interacts with CEP290, DCTN1, PCNT, PCM1 and CEP152. Interacts with 14-3-3 proteins following UV-induced phosphorylation by MAPKAPK2; this inhibits formation of novel centriolar satellites. Interacts with SDCCAG8. Interacts with CCDC61. Interacts with PLK4. Post-translationally, ubiquitinated. Undergoes monoubiquitination catalyzed by the E3 ubiquitin-protein ligase MIB1 in proliferating cells, preventing cilia formation. Monoubiquitination by MIB1 is inhibited in response to cellular stress, such as ultraviolet light (UV) radiation or heat shock, resulting in cilia formation initiation. In terms of processing, MAPKAPK2-dependent phosphorylation at Ser-47 and Ser-78 occurs in response to cellular stress such as exposure to ultraviolet irradiation and promotes binding to 14-3-3 proteins which leads to cytoplasmic sequestration of CEP131 and blocks formation of new centriolar satellites. Phosphorylation at Ser-78 mediated by PLK4 is essential for proper organization and integrity of centriolar satellites but is dispensable for its localization to centrioles and its function in ciliogenesis.

It is found in the cytoplasm. The protein localises to the cytoskeleton. The protein resides in the microtubule organizing center. Its subcellular location is the centrosome. It localises to the centriolar satellite. It is found in the centriole. The protein localises to the cilium basal body. The protein resides in the cytoplasmic vesicle. Its subcellular location is the secretory vesicle. It localises to the acrosome. In terms of biological role, component of centriolar satellites contributing to the building of a complex and dynamic network required to regulate cilia/flagellum formation. In proliferating cells, MIB1-mediated ubiquitination induces its sequestration within centriolar satellites, precluding untimely cilia formation initiation. In contrast, during normal and ultraviolet or heat shock cellular stress-induced ciliogenesis, its non-ubiquitinated form is rapidly displaced from centriolar satellites and recruited to centrosome/basal bodies in a microtubule- and p38 MAPK-dependent manner. Also acts as a negative regulator of BBSome ciliary trafficking. Plays a role in sperm flagellar formation; may be involved in the regulation of intraflagellar transport (IFT) and/or intramanchette (IMT) trafficking, which are important for axoneme extension and/or cargo delivery to the nascent sperm tail. Required for optimal cell proliferation and cell cycle progression; may play a role in the regulation of genome stability in non-ciliogenic cells. Involved in centriole duplication. Required for CEP152, WDR62 and CEP63 centrosomal localization and promotes the centrosomal localization of CDK2. Essential for maintaining proper centriolar satellite integrity. The sequence is that of Centrosomal protein of 131 kDa (CEP131) from Homo sapiens (Human).